Here is a 330-residue protein sequence, read N- to C-terminus: Probable L-lactate dehydrogenase (330 aa).

Substrate-binding residues include Arg105, Asn137, and Arg168. Asn137 contributes to the NAD(+) binding site. Residue His192 is the Proton acceptor of the active site.

It belongs to the LDH/MDH superfamily. LDH family. Homotetramer.

The protein localises to the cytoplasm. The catalysed reaction is (S)-lactate + NAD(+) = pyruvate + NADH + H(+). It functions in the pathway fermentation; pyruvate fermentation to lactate; (S)-lactate from pyruvate: step 1/1. The chain is Probable L-lactate dehydrogenase from Schizosaccharomyces pombe (strain 972 / ATCC 24843) (Fission yeast).